A 299-amino-acid chain; its full sequence is Non-structural protein V (299 aa).

The tract at residues Asp41–Asn99 is disordered. The interaction with host STAT1 stretch occupies residues Tyr110 to Val120. Low complexity predominate over residues Gly134–Asp145. Positions Gly134–Arg168 are disordered. Residues Asn146–Thr160 show a composition bias toward acidic residues. 8 residues coordinate Zn(2+): His232, Cys251, Cys255, Cys267, Cys269, Cys272, Cys276, and Cys279.

The protein belongs to the paramyxoviruses V protein family. As to quaternary structure, interacts with host IFIH1/MDA5 and DHX58/LGP2; these interactions are involved in the inhibition of the host type I interferon signaling pathway. Interacts with host TYK2; this interaction inhibits the type I interferon signaling pathway without affecting the type II pathway. Interacts with host IRF7; this interaction inhibits IRF7 translocation to the nucleus. Interacts with host CHUK. Interacts with host RELA/p65; this interaction inhibits the nuclear translocation of NF-KappaB. Interacts (via N-terminus) with host STAT1 and JAK1; these interactions inhibit STAT1 phosphorylation by Jak1 and thereby the type I interferon signaling pathway. Interacts (via C-terminus) with host STAT2; this interaction is involved in the inhibition of the host type I interferon signaling pathway. Forms a complex with host PPP1CA and PPP1CC; this interaction prevents dephosphorylation of host IFIH1/MDA5 and leads to the inhibition of the host type I interferon signaling pathway. Interacts with host IRF9; this interaction prevents the binding of IRF9 to STAT2 and thereby the type I interferon signaling pathway. Interacts with host RIGI regulatory protein (via CARDs domain) and host TRIM25 (via SPRY domain); these interactions prevent TRIM25-mediated ubiquitination of RIG-I and disrupts downstream RIG-I signaling.

The protein resides in the host cytoplasm. Its function is as follows. Plays an essential role in the inhibition of host immune response. Prevents the establishment of cellular antiviral state by blocking interferon-alpha/beta (IFN-alpha/beta) production and signaling pathway. Interacts with host IFIH1/MDA5 and DHX58/LGP2 to inhibit the transduction pathway involved in the activation of IFN-beta promoter, thus protecting the virus against cell antiviral state. Blocks the type I interferon signaling pathway by interacting with host TYK2 and thereby inhibiting downstream STAT1 and STAT2 phosphorylation. Blocks the type I interferon signaling pathway by disrupting the RIG-I signaling pathway. Moderately affects the type II interferon signaling. Prevents PP1alpha/gamma-mediated dephosphorylation of host IFIH1/MDA5 and thus blocks its activation. The sequence is that of Non-structural protein V (P/V) from Measles virus (strain Edmonston) (MeV).